Consider the following 86-residue polypeptide: UPF0457 protein BCE33L2265 (86 aa).

The protein belongs to the UPF0457 family.

The polypeptide is UPF0457 protein BCE33L2265 (Bacillus cereus (strain ZK / E33L)).